We begin with the raw amino-acid sequence, 417 residues long: Alpha-galactosidase (417 aa).

The first 55 residues, 1-55 (MARASSSSSPPSPRLLLLLLVAVAATLLPEAAALGNFTAESRGARWRSRRARRRA), serve as a signal peptide directing secretion. Alpha-D-galactose contacts are provided by tryptophan 71, aspartate 106, aspartate 107, cysteine 156, lysine 183, aspartate 185, tryptophan 219, arginine 236, and aspartate 240. 2 disulfides stabilise this stretch: cysteine 76-cysteine 108 and cysteine 156-cysteine 187. The active-site Nucleophile is aspartate 185. The active-site Proton donor is the aspartate 240.

This sequence belongs to the glycosyl hydrolase 27 family.

The enzyme catalyses Hydrolysis of terminal, non-reducing alpha-D-galactose residues in alpha-D-galactosides, including galactose oligosaccharides, galactomannans and galactolipids.. The catalysed reaction is melibiose + H2O = D-galactose + D-glucose. It catalyses the reaction raffinose + H2O = sucrose + D-galactose. It carries out the reaction stachyose + H2O = raffinose + D-galactose. The enzyme catalyses alpha-D-Gal-(1-&gt;6)-beta-D-Man-(1-&gt;4)-beta-D-Man-(1-&gt;4)-D-Man + H2O = beta-D-Man-(1-&gt;4)-beta-D-Man-(1-&gt;4)-D-Man + D-galactose. The catalysed reaction is beta-D-Man-(1-&gt;4)-[alpha-D-Gal-(1-&gt;6)]-beta-D-Man-(1-&gt;4)-beta-D-Man-(1-&gt;4)-D-Man + H2O = beta-D-Man-(1-&gt;4)-beta-D-Man-(1-&gt;4)-beta-D-Man-(1-&gt;4)-D-Man + D-galactose. 1 mM Hg(2+) and Ag(2+) decrease activity by 98% and 96%, respectively. 1 mM Para-chloromercuribenzoic acid (PCMB) completely inhibits enzymatic activity. In terms of biological role, hydrolyzes melibiose, raffinose and stachyose in the following decreasing order of reactivity: raffinose, melibiose, stachyose. Acts on both the terminal alpha-galactosyl residue and the side-chain alpha-galactosyl residue of the galactomanno-oligosaccharides. The protein is Alpha-galactosidase of Oryza sativa subsp. japonica (Rice).